Consider the following 251-residue polypeptide: Cyclohexanol dehydrogenase (251 aa).

NAD(+) is bound by residues D42, N95, Y161, K165, I194, and T196. Y161 (proton acceptor) is an active-site residue.

This sequence belongs to the short-chain dehydrogenases/reductases (SDR) family.

It catalyses the reaction cyclohexanol + NAD(+) = cyclohexanone + NADH + H(+). In terms of biological role, catalyzes the oxidation of cyclohexanol to cyclohexanone. Required for the conversion of cyclohexanol to adipic acid. The polypeptide is Cyclohexanol dehydrogenase (Acinetobacter sp. (strain SE19)).